The primary structure comprises 425 residues: 5'-deoxyadenosine deaminase (425 aa).

Residues His-62 and His-64 each coordinate Zn(2+). Positions 91 and 183 each coordinate substrate. His-210 contributes to the Zn(2+) binding site. Substrate is bound by residues Glu-213 and Asp-298. Asp-298 contributes to the Zn(2+) binding site.

It belongs to the metallo-dependent hydrolases superfamily. MTA/SAH deaminase family. In terms of assembly, homotetramer. The cofactor is Zn(2+).

It carries out the reaction 5'-deoxyadenosine + H2O + H(+) = 5'-deoxyinosine + NH4(+). The catalysed reaction is S-adenosyl-L-homocysteine + H2O + H(+) = S-inosyl-L-homocysteine + NH4(+). It catalyses the reaction S-methyl-5'-thioadenosine + H2O + H(+) = S-methyl-5'-thioinosine + NH4(+). The enzyme catalyses adenosine + H2O + H(+) = inosine + NH4(+). It participates in amino-acid biosynthesis; S-adenosyl-L-methionine biosynthesis. In terms of biological role, catalyzes the deamination of three SAM-derived enzymatic products, namely 5'-deoxyadenosine, S-adenosyl-L-homocysteine, and 5'-methylthioadenosine, to produce the inosine analogs. Can also deaminate adenosine. The preferred substrate for this enzyme is 5'-deoxyadenosine, but all these substrates are efficiently deaminated. Likely functions in a S-adenosyl-L-methionine (SAM) recycling pathway from S-adenosyl-L-homocysteine (SAH) produced from SAM-dependent methylation reactions. May also be involved in the recycling of 5'-deoxyadenosine, whereupon the 5'-deoxyribose moiety of 5'-deoxyinosine is further metabolized to deoxyhexoses used for the biosynthesis of aromatic amino acids in methanogens. In Methanosphaera stadtmanae (strain ATCC 43021 / DSM 3091 / JCM 11832 / MCB-3), this protein is 5'-deoxyadenosine deaminase.